A 462-amino-acid chain; its full sequence is Bifunctional protein GlmU (462 aa).

Residues 1–235 (MSYINFSAII…TFEIMGVNSK (235 aa)) form a pyrophosphorylase region. UDP-N-acetyl-alpha-D-glucosamine-binding positions include 11-14 (LAAG), lysine 25, glutamine 80, 85-86 (GT), 107-109 (YGD), glycine 144, glutamate 159, and asparagine 233. Aspartate 109 contributes to the Mg(2+) binding site. Asparagine 233 contributes to the Mg(2+) binding site. Residues 236 to 256 (SDFVDLDKQYQQRKVQCLLSS) are linker. The interval 257–462 (GLMIIDPNRF…LNWKRLKNKK (206 aa)) is N-acetyltransferase. Arginine 339 and lysine 357 together coordinate UDP-N-acetyl-alpha-D-glucosamine. Histidine 369 (proton acceptor) is an active-site residue. UDP-N-acetyl-alpha-D-glucosamine contacts are provided by tyrosine 372 and asparagine 383. Residues alanine 386, 392–393 (NY), alanine 429, and arginine 446 contribute to the acetyl-CoA site.

In the N-terminal section; belongs to the N-acetylglucosamine-1-phosphate uridyltransferase family. It in the C-terminal section; belongs to the transferase hexapeptide repeat family. As to quaternary structure, homotrimer. Mg(2+) serves as cofactor.

Its subcellular location is the cytoplasm. It catalyses the reaction alpha-D-glucosamine 1-phosphate + acetyl-CoA = N-acetyl-alpha-D-glucosamine 1-phosphate + CoA + H(+). It carries out the reaction N-acetyl-alpha-D-glucosamine 1-phosphate + UTP + H(+) = UDP-N-acetyl-alpha-D-glucosamine + diphosphate. It functions in the pathway nucleotide-sugar biosynthesis; UDP-N-acetyl-alpha-D-glucosamine biosynthesis; N-acetyl-alpha-D-glucosamine 1-phosphate from alpha-D-glucosamine 6-phosphate (route II): step 2/2. Its pathway is nucleotide-sugar biosynthesis; UDP-N-acetyl-alpha-D-glucosamine biosynthesis; UDP-N-acetyl-alpha-D-glucosamine from N-acetyl-alpha-D-glucosamine 1-phosphate: step 1/1. The protein operates within bacterial outer membrane biogenesis; LPS lipid A biosynthesis. In terms of biological role, catalyzes the last two sequential reactions in the de novo biosynthetic pathway for UDP-N-acetylglucosamine (UDP-GlcNAc). The C-terminal domain catalyzes the transfer of acetyl group from acetyl coenzyme A to glucosamine-1-phosphate (GlcN-1-P) to produce N-acetylglucosamine-1-phosphate (GlcNAc-1-P), which is converted into UDP-GlcNAc by the transfer of uridine 5-monophosphate (from uridine 5-triphosphate), a reaction catalyzed by the N-terminal domain. This chain is Bifunctional protein GlmU, found in Blochmanniella pennsylvanica (strain BPEN).